The primary structure comprises 329 residues: Segregation and condensation protein B (329 aa).

Disordered regions lie at residues 1 to 39 (MTTG…GPAD), 252 to 274 (IVEK…SDPA), and 286 to 329 (SEAA…PKPE).

Belongs to the ScpB family. In terms of assembly, homodimer. Homodimerization may be required to stabilize the binding of ScpA to the Smc head domains. Component of the Structural Maintenance of Chromosome (SMC) condensin-like complex composed of ScpA, ScpB and the Smc homodimer. ScpA and ScpB bind to the head domain of Smc, the presence of the three proteins is required for the association of the complex with DNA.

The protein resides in the cytoplasm. Functionally, a conditionally essential component of the chromosome segregation machinery. Required for chromosome condensation and partitioning. Important for positioning and anchoring of ParB-parS complexes (ori of replication) in the subpolar region, and of the ter replication site, as well as for segration of the ParB-parS complex and thus chromosome segregation. Probably acts via the formation of a condensin-like complex containing Smc, ScpA and ScpB that pulls DNA away from mid-cell into both cell halves. The protein is Segregation and condensation protein B of Myxococcus xanthus (strain DK1622).